A 153-amino-acid polypeptide reads, in one-letter code: Large ribosomal subunit protein uL22 (153 aa).

The disordered stretch occupies residues 110-153 (ITVIVESRPPKQKGASAASARSRRAQGSKAAATKKSAETKEGSE). A compositionally biased stretch (basic and acidic residues) spans 144–153 (KSAETKEGSE).

This sequence belongs to the universal ribosomal protein uL22 family. Part of the 50S ribosomal subunit.

In terms of biological role, this protein binds specifically to 23S rRNA; its binding is stimulated by other ribosomal proteins, e.g. L4, L17, and L20. It is important during the early stages of 50S assembly. It makes multiple contacts with different domains of the 23S rRNA in the assembled 50S subunit and ribosome. Functionally, the globular domain of the protein is located near the polypeptide exit tunnel on the outside of the subunit, while an extended beta-hairpin is found that lines the wall of the exit tunnel in the center of the 70S ribosome. This chain is Large ribosomal subunit protein uL22, found in Mycolicibacterium smegmatis (strain ATCC 700084 / mc(2)155) (Mycobacterium smegmatis).